Here is a 488-residue protein sequence, read N- to C-terminus: Altronate oxidoreductase (488 aa).

Val-18–Ala-29 contacts NAD(+).

The protein belongs to the mannitol dehydrogenase family. UxaB subfamily.

It catalyses the reaction D-altronate + NAD(+) = keto-D-tagaturonate + NADH + H(+). It functions in the pathway carbohydrate metabolism; pentose and glucuronate interconversion. This Pectobacterium carotovorum subsp. carotovorum (strain PC1) protein is Altronate oxidoreductase.